We begin with the raw amino-acid sequence, 94 residues long: Small ribosomal subunit protein bS6 (94 aa).

Belongs to the bacterial ribosomal protein bS6 family.

Binds together with bS18 to 16S ribosomal RNA. This chain is Small ribosomal subunit protein bS6, found in Phytoplasma mali (strain AT).